A 69-amino-acid polypeptide reads, in one-letter code: Disintegrin VLO5B (69 aa).

The Disintegrin domain maps to 1–66; that stretch reads MNSANPCCDP…DCPRNPWKSE (66 aa). Disulfide bonds link Cys-7/Cys-30, Cys-21/Cys-27, Cys-26/Cys-51, and Cys-39/Cys-58. The Cell attachment site; atypical (MLD) motif lies at 43–45; the sequence is MLD.

Belongs to the disintegrin family. Dimeric disintegrin subfamily. As to quaternary structure, heterodimer with VLO5A; disulfide-linked. In terms of tissue distribution, expressed by the venom gland.

Its subcellular location is the secreted. Functionally, poor inhibitor of platelet aggregation. The disintegrin inhibits the adhesion of the alpha-4/beta-1 (ITGA4/ITGB1) integrin to VCAM-1. Inhibition on alpha-2b/beta-3 (ITGA2B/ITGB3) is low. In Macrovipera lebetina obtusa (Levant blunt-nosed viper), this protein is Disintegrin VLO5B.